The following is a 119-amino-acid chain: Large ribosomal subunit protein uL18 (119 aa).

Positions 1–23 (MISKPDKNKTRQRRHARVRGKIS) are disordered. Residues 10 to 20 (TRQRRHARVRG) are compositionally biased toward basic residues.

This sequence belongs to the universal ribosomal protein uL18 family. Part of the 50S ribosomal subunit; part of the 5S rRNA/L5/L18/L25 subcomplex. Contacts the 5S and 23S rRNAs.

Functionally, this is one of the proteins that bind and probably mediate the attachment of the 5S RNA into the large ribosomal subunit, where it forms part of the central protuberance. The polypeptide is Large ribosomal subunit protein uL18 (Lacticaseibacillus casei (strain BL23) (Lactobacillus casei)).